Here is a 227-residue protein sequence, read N- to C-terminus: Homeobox protein HD-10 (227 aa).

The homeobox DNA-binding region spans 30-89 (FVKHRKRTTKAQLKVLEETFETNIRPDANMRKKLGEQLGMTPRSVQVWFQNRRAKIKKLT). The disordered stretch occupies residues 88-115 (LTQKKMMQQENTDNTKGPDAAHGSSSPK). Residues 92 to 102 (KMMQQENTDNT) are compositionally biased toward polar residues.

It localises to the nucleus. This Encephalitozoon cuniculi (strain GB-M1) (Microsporidian parasite) protein is Homeobox protein HD-10 (HD-10).